A 624-amino-acid chain; its full sequence is Chaperone protein HtpG (624 aa).

The segment at 1–336 is a; substrate-binding; it reads MKGQETRGFQ…SSDLPLNVSR (336 aa). Residues 337 to 552 form a b region; it reads EILQDSTVTR…ADEMSTQMAK (216 aa). The tract at residues 553-624 is c; the sequence is LFAAAGQKVP…IRRMNQLLVS (72 aa).

The protein belongs to the heat shock protein 90 family. Homodimer.

It is found in the cytoplasm. Functionally, molecular chaperone. Has ATPase activity. This chain is Chaperone protein HtpG, found in Escherichia coli O139:H28 (strain E24377A / ETEC).